The primary structure comprises 370 residues: Queuine tRNA-ribosyltransferase (370 aa).

Asp89 functions as the Proton acceptor in the catalytic mechanism. Residues 89–93 (DSGGF), Asp143, and Gly214 each bind substrate. The tract at residues 245 to 251 (GVGKPED) is RNA binding. Asp264 serves as the catalytic Nucleophile. The interval 269-273 (TRNAR) is RNA binding; important for wobble base 34 recognition. Residues Cys302, Cys304, Cys307, and His333 each contribute to the Zn(2+) site.

This sequence belongs to the queuine tRNA-ribosyltransferase family. In terms of assembly, homodimer. Within each dimer, one monomer is responsible for RNA recognition and catalysis, while the other monomer binds to the replacement base PreQ1. It depends on Zn(2+) as a cofactor.

The enzyme catalyses 7-aminomethyl-7-carbaguanine + guanosine(34) in tRNA = 7-aminomethyl-7-carbaguanosine(34) in tRNA + guanine. It participates in tRNA modification; tRNA-queuosine biosynthesis. Catalyzes the base-exchange of a guanine (G) residue with the queuine precursor 7-aminomethyl-7-deazaguanine (PreQ1) at position 34 (anticodon wobble position) in tRNAs with GU(N) anticodons (tRNA-Asp, -Asn, -His and -Tyr). Catalysis occurs through a double-displacement mechanism. The nucleophile active site attacks the C1' of nucleotide 34 to detach the guanine base from the RNA, forming a covalent enzyme-RNA intermediate. The proton acceptor active site deprotonates the incoming PreQ1, allowing a nucleophilic attack on the C1' of the ribose to form the product. After dissociation, two additional enzymatic reactions on the tRNA convert PreQ1 to queuine (Q), resulting in the hypermodified nucleoside queuosine (7-(((4,5-cis-dihydroxy-2-cyclopenten-1-yl)amino)methyl)-7-deazaguanosine). In Buchnera aphidicola subsp. Acyrthosiphon pisum (strain APS) (Acyrthosiphon pisum symbiotic bacterium), this protein is Queuine tRNA-ribosyltransferase.